The following is a 37-amino-acid chain: MNQKEFQAVLDWMLSPTIIQFHEYNYMLQKSLPFLRR.

Belongs to the phi29likevirus gp16.5 family.

This Bacillus phage phi29 (Bacteriophage phi-29) protein is Gene product 16.5 (16.5).